Consider the following 338-residue polypeptide: 1-aminocyclopropane-1-carboxylate deaminase (338 aa).

Lys-51 carries the post-translational modification N6-(pyridoxal phosphate)lysine. The active-site Nucleophile is the Ser-78.

Belongs to the ACC deaminase/D-cysteine desulfhydrase family. As to quaternary structure, homotrimer. It depends on pyridoxal 5'-phosphate as a cofactor.

It carries out the reaction 1-aminocyclopropane-1-carboxylate + H2O = 2-oxobutanoate + NH4(+). In terms of biological role, catalyzes a cyclopropane ring-opening reaction, the irreversible conversion of 1-aminocyclopropane-1-carboxylate (ACC) to ammonia and alpha-ketobutyrate. Allows growth on ACC as a nitrogen source. This Acidovorax ebreus (strain TPSY) (Diaphorobacter sp. (strain TPSY)) protein is 1-aminocyclopropane-1-carboxylate deaminase.